The sequence spans 214 residues: Orotate phosphoribosyltransferase (214 aa).

Lysine 26 contacts 5-phospho-alpha-D-ribose 1-diphosphate. 34–35 is an orotate binding site; it reads FF. 5-phospho-alpha-D-ribose 1-diphosphate contacts are provided by residues 72–73, arginine 98, lysine 99, lysine 102, histidine 104, and 123–131; these read YK and DDVISAGTS. Orotate contacts are provided by serine 127 and arginine 155.

This sequence belongs to the purine/pyrimidine phosphoribosyltransferase family. PyrE subfamily. Homodimer. The cofactor is Mg(2+).

The catalysed reaction is orotidine 5'-phosphate + diphosphate = orotate + 5-phospho-alpha-D-ribose 1-diphosphate. It functions in the pathway pyrimidine metabolism; UMP biosynthesis via de novo pathway; UMP from orotate: step 1/2. Functionally, catalyzes the transfer of a ribosyl phosphate group from 5-phosphoribose 1-diphosphate to orotate, leading to the formation of orotidine monophosphate (OMP). The sequence is that of Orotate phosphoribosyltransferase from Chromobacterium violaceum (strain ATCC 12472 / DSM 30191 / JCM 1249 / CCUG 213 / NBRC 12614 / NCIMB 9131 / NCTC 9757 / MK).